The chain runs to 95 residues: Scorpine-like peptide Smp76 (95 aa).

The signal sequence occupies residues 1-19 (MNCKLTALLFLGLIVIASC). The region spanning 55-95 (EFQCVANVDTLGNCKKHCAKTTGEKGYCHGTKCKCGIELSY) is the BetaSPN-type CS-alpha/beta domain. Intrachain disulfides connect Cys58-Cys82, Cys68-Cys87, and Cys72-Cys89.

Post-translationally, disulfide bonds are critical for antiviral function, and their disruption inhibit viral activity. In terms of tissue distribution, expressed by the venom gland.

Its subcellular location is the secreted. Functionally, antibacterial peptide. Dose-dependently inhibits Dengue virus (DENV), Zika virus (ZIKV) and Hepatitis C virus (HCV) infections. Two mechanisms of action have been described by two different groups: one involving activity on extracellular particles, and the other regulating the immune system. On Dengue virus (DENV), Zika virus (ZIKV), suppress the established viral infection, similar to the effect of interferon (IFN)-beta. Mechanistically, upregulates the expression of IFN-beta by activating interferon regulatory transcription factor 3 (IRF3) phosphorylation. On HCV and DENV, acts by inactivating extra-cellular infectious particles without affecting viral replication. Shows very weak inhibition on measles virus. Is neither toxic nor hemolytic in vitro at high concentrations. The chain is Scorpine-like peptide Smp76 from Scorpio palmatus (Israeli golden scorpion).